The sequence spans 213 residues: uncharacterized protein (213 aa).

3 helical membrane-spanning segments follow: residues 26–46 (FINFIRIAIFIVMAWIGGLKV), 112–132 (ASYIIGAIIVTVGILTLAGIW), and 136–156 (AGLAGGLLTFGMSIVTLSFLI).

The protein localises to the cell membrane. This is an uncharacterized protein from Haemophilus influenzae (strain ATCC 51907 / DSM 11121 / KW20 / Rd).